Consider the following 329-residue polypeptide: AUGMIN subunit 7 (329 aa).

A coiled-coil region spans residues 169-197 (DVSELETKLSEQAKILSNLQQKVDDLAAK).

Part of the augmin complex composed of 8 subunits. The complex acts on microtubules and interacts with gamma-tubulin in spindles and the phragmoplast.

It is found in the cytoplasm. Its subcellular location is the cytoskeleton. The protein resides in the spindle. It localises to the phragmoplast. Its function is as follows. Contributes to the assembly of the acentrosomal spindle and phragmoplast microtubule arrays as part of the augmin complex. Regulates the association of gamma-tubulin with the spindle and phragmoplast microtubules. In Arabidopsis thaliana (Mouse-ear cress), this protein is AUGMIN subunit 7.